Here is a 542-residue protein sequence, read N- to C-terminus: Coiled-coil domain-containing protein 60 (542 aa).

The stretch at 70–97 (TMLQEETAFKKHQQHLKKLQEEELNKFQ) forms a coiled coil. 2 disordered regions span residues 228-284 (ATRK…EEEV) and 334-358 (QTTH…TQKK). 2 stretches are compositionally biased toward low complexity: residues 245-261 (SGGS…NPSS) and 342-351 (RSSTTSGESH).

This chain is Coiled-coil domain-containing protein 60 (Ccdc60), found in Rattus norvegicus (Rat).